We begin with the raw amino-acid sequence, 647 residues long: Starch synthase 1, chloroplastic/amyloplastic (647 aa).

A chloroplast-targeting transit peptide spans Met1–Arg41. Residues Pro66–Pro91 show a composition bias toward pro residues. A disordered region spans residues Pro66–Val95. Residue Lys153 coordinates ADP-alpha-D-glucose.

Belongs to the glycosyltransferase 1 family. Bacterial/plant glycogen synthase subfamily.

The protein resides in the plastid. The protein localises to the chloroplast. Its subcellular location is the amyloplast. The enzyme catalyses [(1-&gt;4)-alpha-D-glucosyl](n) + ADP-alpha-D-glucose = [(1-&gt;4)-alpha-D-glucosyl](n+1) + ADP + H(+). It participates in glycan biosynthesis; starch biosynthesis. The chain is Starch synthase 1, chloroplastic/amyloplastic (WSSI-2) from Triticum aestivum (Wheat).